Here is a 575-residue protein sequence, read N- to C-terminus: Cytokinin dehydrogenase 1 (575 aa).

The N-terminal stretch at 1-31 (MGLTSSLRFHRQNNKTFLGIFMILVLSCIPG) is a signal peptide. N-linked (GlcNAc...) asparagine glycans are attached at residues Asn14, Asn38, and Asn115. Residues 84–262 (YQLPPLAILH…TRARISLEPA (179 aa)) enclose the FAD-binding PCMH-type domain. FAD-binding residues include Ala120, Gly122, and Gly124. His125 is subject to Pros-8alpha-FAD histidine. FAD-binding residues include Ser126, Gln130, Asp186, Thr191, Ser197, Ile201, and Ile252. Asn303, Asn318, Asn437, and Asn467 each carry an N-linked (GlcNAc...) asparagine glycan. Tyr498 and Gln536 together coordinate FAD.

Belongs to the oxygen-dependent FAD-linked oxidoreductase family. FAD serves as cofactor. As to expression, expressed in shoot apexes, lateral shoot meristems, growing tissues of young flowers, and weakly at the root-hypocotyl junction.

Its subcellular location is the vacuole. It carries out the reaction N(6)-dimethylallyladenine + A + H2O = 3-methyl-2-butenal + adenine + AH2. In terms of biological role, catalyzes the oxidation of cytokinins, a family of N(6)-substituted adenine derivatives that are plant hormones, where the substituent is an isopentenyl group. Catalyzes in vitro the oxidation of various types of cytokinin nucleotides that are known as direct products of cytokinin biosynthesis. Promotes adventitious root initiation downstream of MYC2-dependent jasmonate signaling. Cytokinin degraded by CKX1 is required for cell division in the female gametophyte by modulating the expression of cell cycle genes. The sequence is that of Cytokinin dehydrogenase 1 (CKX1) from Arabidopsis thaliana (Mouse-ear cress).